A 338-amino-acid polypeptide reads, in one-letter code: Glutamyl-tRNA reductase (338 aa).

Substrate is bound by residues 50-53 (TCHR), S102, 107-109 (ETE), and Q113. The active-site Nucleophile is C51. 181–186 (GYSEIN) contacts NADP(+).

It belongs to the glutamyl-tRNA reductase family. Homodimer.

It carries out the reaction (S)-4-amino-5-oxopentanoate + tRNA(Glu) + NADP(+) = L-glutamyl-tRNA(Glu) + NADPH + H(+). The protein operates within porphyrin-containing compound metabolism; protoporphyrin-IX biosynthesis; 5-aminolevulinate from L-glutamyl-tRNA(Glu): step 1/2. In terms of biological role, catalyzes the NADPH-dependent reduction of glutamyl-tRNA(Glu) to glutamate 1-semialdehyde (GSA). This chain is Glutamyl-tRNA reductase, found in Chlamydia abortus (strain DSM 27085 / S26/3) (Chlamydophila abortus).